Consider the following 213-residue polypeptide: Orotate phosphoribosyltransferase (213 aa).

K26 contacts 5-phospho-alpha-D-ribose 1-diphosphate. F34–F35 is a binding site for orotate. 5-phospho-alpha-D-ribose 1-diphosphate contacts are provided by residues Y72–K73, R99, K100, K103, H105, and D124–A132. Positions 128 and 156 each coordinate orotate.

The protein belongs to the purine/pyrimidine phosphoribosyltransferase family. PyrE subfamily. In terms of assembly, homodimer. Mg(2+) serves as cofactor.

The catalysed reaction is orotidine 5'-phosphate + diphosphate = orotate + 5-phospho-alpha-D-ribose 1-diphosphate. Its pathway is pyrimidine metabolism; UMP biosynthesis via de novo pathway; UMP from orotate: step 1/2. Functionally, catalyzes the transfer of a ribosyl phosphate group from 5-phosphoribose 1-diphosphate to orotate, leading to the formation of orotidine monophosphate (OMP). The polypeptide is Orotate phosphoribosyltransferase (Enterobacter sp. (strain 638)).